The chain runs to 646 residues: bZIP transcription factor 39 (646 aa).

The Cytoplasmic segment spans residues 1 to 311 (MAEPALLDPT…KSKSKTKTKK (311 aa)). The tract at residues 25-172 (HELPLAGGGG…GGTVCEEEED (148 aa)) is disordered. The span at 43–53 (LDGLEFDLPGD) shows a compositional bias: low complexity. The segment covering 59 to 69 (FLLRSPERDDS) has biased composition (basic and acidic residues). Low complexity predominate over residues 71-98 (EGSAAGSGPTASPSSSPTTSASNSAVAN). Residues 103–113 (EVKHEESDEGR) are compositionally biased toward basic and acidic residues. The segment covering 159-172 (DSDEGGTVCEEEED) has biased composition (acidic residues). Residues 172-232 (DERRAARLMR…AENATLRQQL (61 aa)) enclose the bZIP domain. The basic motif stretch occupies residues 174–205 (RRAARLMRNRESAQLSRQRKKRYVEELEEKVK). Positions 211-218 (INDLNSRI) are leucine-zipper. The interval 272 to 308 (LVPIPRLKPQQPVPSSKVVKKPESKKTVENKSKSKTK) is disordered. The segment covering 279–288 (KPQQPVPSSK) has biased composition (low complexity). The segment covering 291–303 (KKPESKKTVENKS) has biased composition (basic and acidic residues). Residues 312-332 (VASVSLLGLLLIMLVFGAFIP) form a helical membrane-spanning segment. Topologically, residues 333–646 (GFNHNFGMCG…FKSSSPHLVN (314 aa)) are lumenal. N-linked (GlcNAc...) asparagine glycans are attached at residues N371, N399, N525, N530, N565, and N571. Residues 560-585 (TGKTANNTEPFNRTSESSSKLPDSKP) are disordered. Residues 562–585 (KTANNTEPFNRTSESSSKLPDSKP) show a composition bias toward polar residues.

It belongs to the bZIP family. In terms of tissue distribution, highly expressed in leaf blade, and at lower levels in roots, leaf sheaths, flowers and seeds.

It localises to the endoplasmic reticulum membrane. The protein localises to the nucleus. In terms of biological role, transcription factor involved in endoplasmic reticulum (ER) stress response. Acts as a ER stress sensor and activates the transcription factor BZIP50 and the chaperone BIP1. This is bZIP transcription factor 39 from Oryza sativa subsp. japonica (Rice).